A 263-amino-acid polypeptide reads, in one-letter code: NAD(P)H-quinone oxidoreductase subunit K, chloroplastic (263 aa).

4 residues coordinate [4Fe-4S] cluster: C64, C65, C129, and C160.

Belongs to the complex I 20 kDa subunit family. In terms of assembly, NDH is composed of at least 16 different subunits, 5 of which are encoded in the nucleus. [4Fe-4S] cluster serves as cofactor.

The protein resides in the plastid. It is found in the chloroplast thylakoid membrane. The catalysed reaction is a plastoquinone + NADH + (n+1) H(+)(in) = a plastoquinol + NAD(+) + n H(+)(out). It catalyses the reaction a plastoquinone + NADPH + (n+1) H(+)(in) = a plastoquinol + NADP(+) + n H(+)(out). NDH shuttles electrons from NAD(P)H:plastoquinone, via FMN and iron-sulfur (Fe-S) centers, to quinones in the photosynthetic chain and possibly in a chloroplast respiratory chain. The immediate electron acceptor for the enzyme in this species is believed to be plastoquinone. Couples the redox reaction to proton translocation, and thus conserves the redox energy in a proton gradient. This Huperzia lucidula (Shining clubmoss) protein is NAD(P)H-quinone oxidoreductase subunit K, chloroplastic (ndhK).